The following is a 1192-amino-acid chain: Methionine synthase (1192 aa).

Positions 1-312 (MTAADKHLYD…AHIREVAAAV (312 aa)) constitute a Hcy-binding domain. Zn(2+) contacts are provided by C231, C297, and C298. The Pterin-binding domain occupies 343–601 (VLVIGERTNA…RIPEEQRNVA (259 aa)). The 94-residue stretch at 635 to 728 (RLAELAGLPL…HMERSDDDSG (94 aa)) folds into the B12-binding N-terminal domain. In terms of domain architecture, B12-binding spans 729–866 (KGRIVLATVK…SAKRGEAPDE (138 aa)). Residues 739–743 (GDVHD), H742, S787, and A845 contribute to the methylcob(III)alamin site. A disordered region spans residues 860–904 (RGEAPDENSPEAIKAREKEAERKARHQRSKRIAAQRKAAEEPVEV). Over residues 872 to 881 (IKAREKEAER) the composition is skewed to basic and acidic residues. The span at 882 to 893 (KARHQRSKRIAA) shows a compositional bias: basic residues. The AdoMet activation domain occupies 893-1192 (AQRKAAEEPV…HHPEAKYFNV (300 aa)). Residues D940, R1135, and 1189 to 1190 (YF) contribute to the S-adenosyl-L-methionine site.

It belongs to the vitamin-B12 dependent methionine synthase family. Methylcob(III)alamin is required as a cofactor. It depends on Zn(2+) as a cofactor.

It catalyses the reaction (6S)-5-methyl-5,6,7,8-tetrahydrofolate + L-homocysteine = (6S)-5,6,7,8-tetrahydrofolate + L-methionine. The protein operates within amino-acid biosynthesis; L-methionine biosynthesis via de novo pathway; L-methionine from L-homocysteine (MetH route): step 1/1. Functionally, catalyzes the transfer of a methyl group from methyl-cobalamin to homocysteine, yielding enzyme-bound cob(I)alamin and methionine. Subsequently, remethylates the cofactor using methyltetrahydrofolate. The sequence is that of Methionine synthase (metH) from Mycobacterium tuberculosis (strain ATCC 25618 / H37Rv).